A 383-amino-acid chain; its full sequence is Adaptive-response sensory kinase SasA (383 aa).

A Histidine kinase domain is found at 152-365 (MVAHELRTPL…CFTFTVPIWQ (214 aa)). His-155 carries the post-translational modification Phosphohistidine; by autocatalysis.

In terms of assembly, homooligomerizes. Interacts with KaiC. Participates in the KaiABC clock complex, whose core is composed of a KaiC homohexamer, 6 KaiB and up to 6 KaiA dimers. SasA and KaiB(fs) compete to bind to KaiC.

The enzyme catalyses ATP + protein L-histidine = ADP + protein N-phospho-L-histidine.. In terms of biological role, member of the two-component regulatory system SasA/RpaA involved in genome-wide circadian gene expression. One of several clock output pathways. Participates in the Kai clock protein complex, the main circadian regulator in cyanobacteria, via its interaction with KaiC. KaiC enhances the autophosphorylation activity of SasA, which then transfers its phosphate group to RpaA to activate it. In addition to its output function, recruits fold-shifted KaiB (KaiB(fs)) to KaiC to cooperatively form the KaiB(6):KaiC(6) complex (independent of SasA kinase activity). Required for robustness of the circadian rhythm of gene expression and is involved in clock output, also required for adaptation to light/dark cycles. The polypeptide is Adaptive-response sensory kinase SasA (Parasynechococcus marenigrum (strain WH8102)).